Consider the following 234-residue polypeptide: Proteasome subunit alpha (234 aa).

It belongs to the peptidase T1A family. In terms of assembly, the 20S proteasome core is composed of 14 alpha and 14 beta subunits that assemble into four stacked heptameric rings, resulting in a barrel-shaped structure. The two inner rings, each composed of seven catalytic beta subunits, are sandwiched by two outer rings, each composed of seven alpha subunits. The catalytic chamber with the active sites is on the inside of the barrel. Has a gated structure, the ends of the cylinder being occluded by the N-termini of the alpha-subunits. Is capped by the proteasome-associated ATPase, ARC.

It localises to the cytoplasm. The protein operates within protein degradation; proteasomal Pup-dependent pathway. The formation of the proteasomal ATPase ARC-20S proteasome complex, likely via the docking of the C-termini of ARC into the intersubunit pockets in the alpha-rings, may trigger opening of the gate for substrate entry. Interconversion between the open-gate and close-gate conformations leads to a dynamic regulation of the 20S proteasome proteolysis activity. In terms of biological role, component of the proteasome core, a large protease complex with broad specificity involved in protein degradation. This is Proteasome subunit alpha from Acidothermus cellulolyticus (strain ATCC 43068 / DSM 8971 / 11B).